We begin with the raw amino-acid sequence, 56 residues long: Small ribosomal subunit protein uS14 (56 aa).

Zn(2+)-binding residues include cysteine 21, cysteine 24, cysteine 39, and cysteine 42.

It belongs to the universal ribosomal protein uS14 family. Component of the 40S small ribosomal subunit. It depends on Zn(2+) as a cofactor.

It is found in the cytoplasm. Its subcellular location is the cytosol. The protein localises to the rough endoplasmic reticulum. The polypeptide is Small ribosomal subunit protein uS14 (RpS29) (Ixodes scapularis (Black-legged tick)).